Here is a 236-residue protein sequence, read N- to C-terminus: N-acetyl-alpha-D-glucosaminyl L-malate deacetylase 1 (236 aa).

Zn(2+)-binding residues include His-12, Asp-15, and His-113.

It belongs to the PIGL family. Zn(2+) serves as cofactor.

The enzyme catalyses (S)-malyl N-acetyl-alpha-D-glucosaminide + H2O = (S)-malyl alpha-D-glucosaminide + acetate. Involved in bacillithiol (BSH) biosynthesis. Catalyzes the second step of the pathway, the deacetylation of N-acetylglucosaminylmalate (GlcNAc-Mal) to glucosamine malate (GlcN-Mal). This Bacillus subtilis (strain 168) protein is N-acetyl-alpha-D-glucosaminyl L-malate deacetylase 1.